The chain runs to 230 residues: Probable thioesterase YBR096W (230 aa).

The protein belongs to the lcsJ thioesterase family.

This is Probable thioesterase YBR096W from Saccharomyces cerevisiae (strain ATCC 204508 / S288c) (Baker's yeast).